Reading from the N-terminus, the 329-residue chain is Protein mlo2 (329 aa).

The UBR-type zinc-finger motif lies at 33-104; sequence DTCTYSMGYL…HSIPCNLRKS (72 aa). The PHD-type zinc finger occupies 120–179; the sequence is GRFCICDTVYNPETEEGTMFQCILCEDWFHEKCLQKTNKGIAIPDAETFEWLVCSECSEK.

It belongs to the UBR7 family.

Its function is as follows. Not known, interfere with mitotic chromosome segregation when overexpressed. This chain is Protein mlo2 (mlo2), found in Schizosaccharomyces pombe (strain 972 / ATCC 24843) (Fission yeast).